The following is a 96-amino-acid chain: RING finger protein Z (96 aa).

Residues 1-10 (MGNCRSKQES) show a composition bias toward basic and acidic residues. The disordered stretch occupies residues 1–21 (MGNCRSKQESHPICPNTQTPE). Gly-2 carries the N-myristoyl glycine; by host lipid modification. The RING-type; atypical zinc-finger motif lies at 41–77 (CKCCWFADRNLINCSDHYLCLRCLNVMLRTSNLCNIC). Residues 91 to 94 (PTAP) carry the PTAP/PSAP motif motif.

The protein belongs to the arenaviridae Z protein family. As to quaternary structure, interacts with protein NP; this interaction probably directs the encapsidated genome to budding sites. Interacts (via RING domain) with polymerase L; this interaction inhibits viral transcription and replication, Z partially blocks the product exit tunnel for the releasing nascent RNA product. Interacts with the glycoprotein complex; this interaction plays a role in virion budding. Interacts with host eIF4E; this interaction results in eIF4E reduced affinity for its substrate, the 5'-m7 G cap structure. Interacts (via late-budding domain) with host TSG101; this interaction is essential for budding and release of viral particles. Interacts with host RPLP0; this interaction may serve to load ribosome-like particles inside the virion. Interacts with host PML; this interaction induces PML bodies redistribution in the cytoplasm upon viral infection. Myristoylation is required for the role of RING finger protein Z in assembly and budding.

The protein resides in the virion. It localises to the host cytoplasm. Its subcellular location is the host perinuclear region. It is found in the host cell membrane. In terms of biological role, plays a crucial role in virion assembly and budding. Expressed late in the virus life cycle, it acts as an inhibitor of viral transcription and RNA synthesis by interacting with the viral polymerase L. Presumably recruits the NP encapsidated genome to cellular membranes at budding sites via direct interaction with NP. Plays critical roles in the final steps of viral release by interacting with host TSG101, a member of the vacuolar protein-sorting pathway and using other cellular host proteins involved in vesicle formation pathway. The budding of the virus progeny occurs after association of protein Z with the viral glycoprotein complex SSP-GP1-GP2 at the cell periphery, step that requires myristoylation of protein Z. Also selectively represses protein production by associating with host eIF4E. In cell-based minigenome assay, has an inhibitory effect on the ribonucleoprotein machinery (vRNP), which is responsible for the replication and transcription of the viral genome. This Hylaeamys megacephalus (Large-headed rice rat) protein is RING finger protein Z.